Consider the following 629-residue polypeptide: FAST kinase domain-containing protein 4 (629 aa).

Positions 559–617 constitute an RAP domain; sequence IAFLRWEFPNFNSRSKDLLGRFVLARRHVLAAGFLVVDVPYYEWLDLKSEWQKTAYLKD.

It belongs to the FAST kinase family.

The protein resides in the mitochondrion matrix. In terms of biological role, plays a role in processing of mitochondrial RNA precursors and in stabilization of a subset of mature mitochondrial RNA species, such as MT-CO1, MT-CO2, MT-CYB, MT-CO3, MT-ND3, MT-ND5 and MT-ATP8/6. May play a role in cell cycle progression. The chain is FAST kinase domain-containing protein 4 (Tbrg4) from Rattus norvegicus (Rat).